Consider the following 154-residue polypeptide: Heat shock protein beta-3 (154 aa).

The interval 48–71 (ARGAGTPQALAEDSASTEKPPGEG) is disordered. The region spanning 57–154 (LAEDSASTEK…VEVKDSLGTK (98 aa)) is the sHSP domain.

It belongs to the small heat shock protein (HSP20) family.

The protein localises to the cytoplasm. Its subcellular location is the nucleus. Its function is as follows. Inhibitor of actin polymerization. In Mus musculus (Mouse), this protein is Heat shock protein beta-3 (Hspb3).